A 631-amino-acid polypeptide reads, in one-letter code: Hepatocyte nuclear factor 1-alpha (631 aa).

The segment at 1–31 (MVSKLSQLQTELLAALLESGLSKEALIQALG) is dimerization. The HNF-p1 domain occupies 1–32 (MVSKLSQLQTELLAALLESGLSKEALIQALGE). A disordered region spans residues 40–81 (GEGPLDKGESCGGGRGELAELPNGLGETRGSEDETDDDGEDF). Ser-70 is subject to Phosphoserine. The residue at position 74 (Thr-74) is a Phosphothreonine. Residues 87 to 182 (KELENLSPEE…VAQQFTHAGQ (96 aa)) form the POU-specific atypical domain. Ser-93 is subject to Phosphoserine. Lys-117 is covalently cross-linked (Glycyl lysine isopeptide (Lys-Gly) (interchain with G-Cter in ubiquitin)). Interaction with DNA stretches follow at residues 130–132 (QRE), 143–149 (HLSQHLN), 155–158 (KTQK), and 203–206 (RFKW). Residues 183–205 (GGLIEEPTGDELPTKKGRRNRFK) form a disordered region. The Nuclear localization signal signature appears at 197-205 (KKGRRNRFK). Positions 199-279 (GRRNRFKWGP…NRRKEEAFRH (81 aa)) form a DNA-binding region, homeobox; HNF1-type. At Ser-247 the chain carries Phosphoserine. Interaction with DNA regions lie at residues 263–265 (RVY) and 270–273 (NRRK). Disordered regions lie at residues 283–358 (MDTY…GLEP) and 545–567 (SDTE…TLHV). Residues 288–298 (GPPPGPGPGPA) are compositionally biased toward pro residues. Ser-313 is subject to Phosphoserine. A compositionally biased stretch (polar residues) spans 325–353 (PATSETAEVPSSSGGPLVTVSTPLHQVSP).

The protein belongs to the HNF1 homeobox family. In terms of assembly, binds DNA as a dimer. Heterotetramer with PCBD1; formed by a dimer of dimers. Interacts with PCBD1. Interacts with BHLHE41. Interacts with NR5A2. Interacts with SPOP; this interaction promotes ubiquitination and degradation of HNF1A. In terms of processing, ubiquitinated in s SPOP-dependent manner; leading to prteasomal degradation. As to expression, liver.

It localises to the nucleus. Its function is as follows. Transcriptional activator that regulates the tissue specific expression of multiple genes, especially in pancreatic islet cells and in liver. Binds to the inverted palindrome 5'-GTTAATNATTAAC-3'. Activates the transcription of CYP1A2, CYP2E1 and CYP3A11. (Microbial infection) Plays a crucial role for hepatitis B virus gene transcription and DNA replication. Mechanistically, synergistically cooperates with NR5A2 to up-regulate the activity of one of the critical cis-elements in the hepatitis B virus genome enhancer II (ENII). The polypeptide is Hepatocyte nuclear factor 1-alpha (HNF1A) (Homo sapiens (Human)).